Consider the following 90-residue polypeptide: FMRFamide-like neuropeptides 27 (90 aa).

Positions 1 to 24 (MFSFRKFLAFMLIVIALMASFSSA) are cleaved as a signal peptide. A propeptide spanning residues 25 to 36 (QPIDEERPIFME) is cleaved from the precursor. Phe61 is subject to Phenylalanine amide. Positions 65 to 90 (SSSPSDISMAELRAIYGGGPVEYVQL) are excised as a propeptide.

This sequence belongs to the FARP (FMRFamide related peptide) family.

Its subcellular location is the secreted. FMRFamides and FMRFamide-like peptides are neuropeptides. The sequence is that of FMRFamide-like neuropeptides 27 from Caenorhabditis briggsae.